The chain runs to 1507 residues: DDB1- and CUL4-associated factor 1 (1507 aa).

The protein kinase-like stretch occupies residues 141–500; the sequence is QPLRTYSTGL…STLEILNLED (360 aa). Residues Ser-202 and Ser-255 each carry the phosphoserine modification. Residues 242 to 288 form a disordered region; it reads HLDSGHKTSSRVNSTTKPEDGGLKKNKSAKQGDRENFRKAKQKLGFS. Residues 562 to 593 enclose the Chromo domain; that stretch reads SYTHEQIVEMMEFLIEYGPAQLYWEPAEVFLK. Lys-701 is modified (N6-acetyllysine). Phosphoserine is present on Ser-828. In terms of domain architecture, LisH spans 846 to 878; it reads PEKELLLLIRNHLISKGLGETATVLTKEADLPM. Thr-888 is modified (phosphothreonine). Ser-895 and Ser-898 each carry phosphoserine. The segment at 917-947 is disordered; the sequence is AAVGASAPSAPTAHPQPRPPQGPLALPGPSY. Phosphoserine occurs at positions 979 and 1000. WD repeat units follow at residues 1091 to 1130, 1133 to 1174, 1176 to 1213, 1215 to 1247, and 1248 to 1290; these read EDESGFTCCAFSARERFLMLGTCTGQLKLYNVFSGQEEAS, CHNS…DMKH, FTEDHYVEFSKHSQDRVIGTKGDIAHIYDIQTGNKLLT, FNPDLANNYKRNCATFNPTDDLVLNDGVLWDVR, and SAQA…LLHT. The interval 1091 to 1290 is WD repeat-like region; the sequence is EDESGFTCCA…DLRTFHLLHT (200 aa). Short sequence motifs (DWD box) lie at residues 1242–1249 and 1278–1285; these read VLWDVRSA and EIWDLRTF. Phosphoserine is present on Ser-1328. The disordered stretch occupies residues 1393 to 1507; that stretch reads RLAEDEDEEE…EDDIILSLNE (115 aa). Composition is skewed to acidic residues over residues 1396 to 1483 and 1490 to 1501; these read EDED…EEVE and DSSDNSDLEDDI. Positions 1418–1507 are interaction with NF2; that stretch reads DDDTDDLDEL…EDDIILSLNE (90 aa).

It belongs to the VPRBP/DCAF1 family. In terms of assembly, component of the DCX (DDB1-CUL4-X-box) E3 ubiquitin-protein ligase complex, named CUL4A-RBX1-DDB1-DCAF1/VPRBP complex. Interacts with DDB1; the interaction is direct. Also forms a ternary complex with DDA1 and DDB1. Interacts with NF2 (via FERM domain). Component of the EDVP complex, a E3 ligase complex containing DYRK2, EDD/UBR5, DDB1 and DCAF1. Interacts with DYRK2; the interaction is direct. Interacts with RAG1; the interaction is direct. Interacts with LLGL1 and LLGL2. Interacts with histone H3. Interacts with ESR1 and LATS1; probably recruited by LATS1 to promote ESR1 ubiquitination and ubiquitin-mediated proteasomal degradation. Directly interacts with TET1, TET2 and TET3 (via C-terminus). Interacts with CEP78; promoting DCAF1 localization to centrosomes. As to quaternary structure, (Microbial infection) Interacts with HIV-1 virus Vpr protein; the interaction is direct. (Microbial infection) Interacts with HIV-2 virus Vpx protein; the interaction is direct and the complex recruits SAMHD1 to promote its ubiquitin-dependent proteasomal degradation. In terms of assembly, (Microbial infection) Interacts (via C-terminus) with human cytomegalovirus protein UL35; this interaction induces the accumulation of cells in the G2 phase of the cell cycle. As to expression, ubiquitously expressed.

It localises to the cytoplasm. It is found in the nucleus. The protein localises to the cytoskeleton. Its subcellular location is the microtubule organizing center. The protein resides in the centrosome. It carries out the reaction L-seryl-[protein] + ATP = O-phospho-L-seryl-[protein] + ADP + H(+). It catalyses the reaction L-threonyl-[protein] + ATP = O-phospho-L-threonyl-[protein] + ADP + H(+). It functions in the pathway protein modification; protein ubiquitination. In terms of biological role, acts both as a substrate recognition component of E3 ubiquitin-protein ligase complexes and as an atypical serine/threonine-protein kinase, playing key roles in various processes such as cell cycle, telomerase regulation and histone modification. Probable substrate-specific adapter of a DCX (DDB1-CUL4-X-box) E3 ubiquitin-protein ligase complex, named CUL4A-RBX1-DDB1-DCAF1/VPRBP complex, which mediates ubiquitination and proteasome-dependent degradation of proteins such as NF2. Involved in the turnover of methylated proteins: recognizes and binds methylated proteins via its chromo domain, leading to ubiquitination of target proteins by the RBX1-DDB1-DCAF1/VPRBP complex. The CUL4A-RBX1-DDB1-DCAF1/VPRBP complex is also involved in B-cell development: DCAF1 is recruited by RAG1 to ubiquitinate proteins, leading to limit error-prone repair during V(D)J recombination. Also part of the EDVP complex, an E3 ligase complex that mediates ubiquitination of proteins such as TERT, leading to TERT degradation and telomerase inhibition. The EDVP complex also mediates ubiquitination and degradation of CCP110. Also acts as an atypical serine/threonine-protein kinase that specifically mediates phosphorylation of 'Thr-120' of histone H2A (H2AT120ph) in a nucleosomal context, thereby repressing transcription. H2AT120ph is present in the regulatory region of many tumor suppresor genes, down-regulates their transcription and is present at high level in a number of tumors. Involved in JNK-mediated apoptosis during cell competition process via its interaction with LLGL1 and LLGL2. By acting on TET dioxygenses, essential for oocyte maintenance at the primordial follicle stage, hence essential for female fertility. Functionally, (Microbial infection) In case of infection by HIV-1 virus, it is recruited by HIV-1 Vpr in order to hijack the CUL4A-RBX1-DDB1-DCAF1/VPRBP function leading to arrest the cell cycle in G2 phase, and also to protect the viral protein from proteasomal degradation by another E3 ubiquitin ligase. The HIV-1 Vpr protein hijacks the CUL4A-RBX1-DDB1-DCAF1/VPRBP complex to promote ubiquitination and degradation of proteins such as TERT and ZIP/ZGPAT. Its function is as follows. (Microbial infection) In case of infection by HIV-2 virus, it is recruited by HIV-2 Vpx in order to hijack the CUL4A-RBX1-DDB1-DCAF1/VPRBP function leading to enhanced efficiency of macrophage infection and promotion of the replication of cognate primate lentiviruses in cells of monocyte/macrophage lineage. The chain is DDB1- and CUL4-associated factor 1 from Homo sapiens (Human).